A 299-amino-acid polypeptide reads, in one-letter code: Protease HtpX homolog (299 aa).

Helical transmembrane passes span 15 to 35 (ILLL…GYLF) and 39 to 59 (GLGG…SMIF). H143 serves as a coordination point for Zn(2+). Residue E144 is part of the active site. H147 contributes to the Zn(2+) binding site. The next 2 membrane-spanning stretches (helical) occupy residues 158–178 (IAVA…RMMW) and 198–218 (IIML…ATLV). Residue E227 coordinates Zn(2+).

Belongs to the peptidase M48B family. The cofactor is Zn(2+).

The protein resides in the cell membrane. The chain is Protease HtpX homolog from Streptococcus pneumoniae (strain Hungary19A-6).